The sequence spans 64 residues: Disintegrin VB7B (64 aa).

One can recognise a Disintegrin domain in the interval 1-64 (ELLQNSGNPC…TGISSDCPRN (64 aa)). 4 disulfides stabilise this stretch: Cys-10–Cys-33, Cys-24–Cys-30, Cys-29–Cys-54, and Cys-42–Cys-61. The Cell attachment site; atypical (KGD) motif lies at 46–48 (KGD).

This sequence belongs to the venom metalloproteinase (M12B) family. P-II subfamily. P-IIe sub-subfamily. In terms of assembly, heterodimer with VB7A; disulfide-linked. Expressed by the venom gland.

It localises to the secreted. Functionally, poor inhibitor of platelet aggregation. The disintegrin inhibits the adhesion of cells expressing the RGD-dependent integrin alpha-5/beta-1 (ITGA5/ITGB1) to immobilized fibronectin. Inhibition on alpha-IIb/beta-3 (ITGA2B/ITGB3) is low. The protein is Disintegrin VB7B of Vipera berus berus (Common viper).